A 270-amino-acid polypeptide reads, in one-letter code: 3-methyl-2-oxobutanoate hydroxymethyltransferase (270 aa).

Mg(2+) contacts are provided by aspartate 48 and aspartate 87. 3-methyl-2-oxobutanoate is bound by residues 48 to 49 (DS), aspartate 87, and lysine 117. Glutamate 119 is a binding site for Mg(2+). Glutamate 186 functions as the Proton acceptor in the catalytic mechanism.

Belongs to the PanB family. Homodecamer; pentamer of dimers. Mg(2+) serves as cofactor.

It localises to the cytoplasm. The enzyme catalyses 3-methyl-2-oxobutanoate + (6R)-5,10-methylene-5,6,7,8-tetrahydrofolate + H2O = 2-dehydropantoate + (6S)-5,6,7,8-tetrahydrofolate. The protein operates within cofactor biosynthesis; (R)-pantothenate biosynthesis; (R)-pantoate from 3-methyl-2-oxobutanoate: step 1/2. In terms of biological role, catalyzes the reversible reaction in which hydroxymethyl group from 5,10-methylenetetrahydrofolate is transferred onto alpha-ketoisovalerate to form ketopantoate. This chain is 3-methyl-2-oxobutanoate hydroxymethyltransferase, found in Synechococcus sp. (strain RCC307).